The chain runs to 93 residues: CRISPR-associated endoribonuclease Cas2 2 (93 aa).

A Mg(2+)-binding site is contributed by Asp-9.

This sequence belongs to the CRISPR-associated endoribonuclease Cas2 protein family. Homodimer, forms a heterotetramer with a Cas1 homodimer. It depends on Mg(2+) as a cofactor.

In terms of biological role, CRISPR (clustered regularly interspaced short palindromic repeat), is an adaptive immune system that provides protection against mobile genetic elements (viruses, transposable elements and conjugative plasmids). CRISPR clusters contain sequences complementary to antecedent mobile elements and target invading nucleic acids. CRISPR clusters are transcribed and processed into CRISPR RNA (crRNA). Functions as a ssRNA-specific endoribonuclease. Involved in the integration of spacer DNA into the CRISPR cassette. The sequence is that of CRISPR-associated endoribonuclease Cas2 2 from Synechocystis sp. (strain ATCC 27184 / PCC 6803 / Kazusa).